The following is a 143-amino-acid chain: Nucleoside diphosphate kinase (143 aa).

The ATP site is built by lysine 11, phenylalanine 59, arginine 87, threonine 93, arginine 104, and asparagine 114. Histidine 117 serves as the catalytic Pros-phosphohistidine intermediate.

Belongs to the NDK family. Homotetramer. Mg(2+) is required as a cofactor.

Its subcellular location is the cytoplasm. The enzyme catalyses a 2'-deoxyribonucleoside 5'-diphosphate + ATP = a 2'-deoxyribonucleoside 5'-triphosphate + ADP. It carries out the reaction a ribonucleoside 5'-diphosphate + ATP = a ribonucleoside 5'-triphosphate + ADP. Functionally, major role in the synthesis of nucleoside triphosphates other than ATP. The ATP gamma phosphate is transferred to the NDP beta phosphate via a ping-pong mechanism, using a phosphorylated active-site intermediate. The sequence is that of Nucleoside diphosphate kinase from Shewanella sp. (strain W3-18-1).